The sequence spans 117 residues: UPF0342 protein LBUL_1430 (117 aa).

Belongs to the UPF0342 family.

The chain is UPF0342 protein LBUL_1430 from Lactobacillus delbrueckii subsp. bulgaricus (strain ATCC BAA-365 / Lb-18).